A 651-amino-acid polypeptide reads, in one-letter code: L-aspartate oxidase, chloroplastic (651 aa).

Residues 1–74 (MAAHVSTGNI…PISETSKPIR (74 aa)) constitute a chloroplast transit peptide. FAD-binding positions include 92–95 (SGVA), Lys114, 121–128 (NTNYAQGG), and Asp292. Arg368 acts as the Proton donor/acceptor in catalysis. FAD-binding positions include Glu453 and 469-470 (SL).

It belongs to the FAD-dependent oxidoreductase 2 family. NadB subfamily. As to quaternary structure, interacts in vitro with QS. FAD serves as cofactor.

It is found in the plastid. The protein resides in the chloroplast. The enzyme catalyses L-aspartate + O2 = iminosuccinate + H2O2. The protein operates within cofactor biosynthesis; NAD(+) biosynthesis; iminoaspartate from L-aspartate (oxidase route): step 1/1. In terms of biological role, catalyzes the oxidation of L-aspartate to iminoaspartate. Can complement nadB-deficient E.coli mutant. Plays a role in stomatal immunity. This chain is L-aspartate oxidase, chloroplastic, found in Arabidopsis thaliana (Mouse-ear cress).